The primary structure comprises 307 residues: Cytochrome f (307 aa).

The first 24 residues, 1–24, serve as a signal peptide directing secretion; it reads MKKNLFLVSVFASLFVGTANNALA. 4 residues coordinate heme: Tyr-25, Cys-45, Cys-48, and His-49. Residues 273–293 traverse the membrane as a helical segment; it reads LQGLVIFLGFVLIAQVFLVLK.

It belongs to the cytochrome f family. The 4 large subunits of the cytochrome b6-f complex are cytochrome b6, subunit IV (17 kDa polypeptide, petD), cytochrome f and the Rieske protein, while the 4 small subunits are PetG, PetL, PetM and PetN. The complex functions as a dimer. It depends on heme as a cofactor.

The protein resides in the plastid. Its subcellular location is the chloroplast thylakoid membrane. Component of the cytochrome b6-f complex, which mediates electron transfer between photosystem II (PSII) and photosystem I (PSI), cyclic electron flow around PSI, and state transitions. The chain is Cytochrome f from Ostreococcus tauri.